The chain runs to 186 residues: Dynactin subunit 3 (186 aa).

The residue at position 2 (alanine 2) is an N-acetylalanine. Residues 135-157 (QQQDQCVEITEESKALLEEYNKT) are a coiled coil.

It belongs to the dynactin subunit 3 family. Subunit of dynactin, a multiprotein complex part of a tripartite complex with dynein and a adapter, such as BICDL1, BICD2 or HOOK3. The dynactin complex is built around ACTR1A/ACTB filament and consists of an actin-related filament composed of a shoulder domain, a pointed end and a barbed end. Its length is defined by its flexible shoulder domain. The soulder is composed of 2 DCTN1 subunits, 4 DCTN2 and 2 DCTN3. The 4 DCNT2 (via N-terminus) bind the ACTR1A filament and act as molecular rulers to determine the length. The pointed end is important for binding dynein-dynactin cargo adapters. Consists of 4 subunits: ACTR10, DCNT4, DCTN5 and DCTN6. The barbed end is composed of a CAPZA1:CAPZB heterodimers, which binds ACTR1A/ACTB filament and dynactin and stabilizes dynactin. As to expression, ubiquitously expressed. Highly expressed in muscle and pancreas and detected at lower levels in brain.

The protein resides in the cytoplasm. Its subcellular location is the cytoskeleton. It is found in the microtubule organizing center. The protein localises to the centrosome. It localises to the chromosome. The protein resides in the centromere. Its subcellular location is the kinetochore. It is found in the spindle. The protein localises to the cleavage furrow. It localises to the midbody. In terms of biological role, part of the dynactin complex that activates the molecular motor dynein for ultra-processive transport along microtubules. Together with dynein may be involved in spindle assembly and cytokinesis. The chain is Dynactin subunit 3 from Homo sapiens (Human).